Here is a 337-residue protein sequence, read N- to C-terminus: Phosphoribosylformylglycinamidine cyclo-ligase (337 aa).

Belongs to the AIR synthase family.

The protein resides in the cytoplasm. The enzyme catalyses 2-formamido-N(1)-(5-O-phospho-beta-D-ribosyl)acetamidine + ATP = 5-amino-1-(5-phospho-beta-D-ribosyl)imidazole + ADP + phosphate + H(+). It participates in purine metabolism; IMP biosynthesis via de novo pathway; 5-amino-1-(5-phospho-D-ribosyl)imidazole from N(2)-formyl-N(1)-(5-phospho-D-ribosyl)glycinamide: step 2/2. The polypeptide is Phosphoribosylformylglycinamidine cyclo-ligase (Pseudothermotoga lettingae (strain ATCC BAA-301 / DSM 14385 / NBRC 107922 / TMO) (Thermotoga lettingae)).